Consider the following 460-residue polypeptide: CCA-adding enzyme (460 aa).

The ATP site is built by Ser50 and Arg53. The CTP site is built by Ser50 and Arg53. Positions 62, 64, and 117 each coordinate Mg(2+). Residues His140, Lys159, and Tyr168 each contribute to the ATP site. 3 residues coordinate CTP: His140, Lys159, and Tyr168.

The protein belongs to the tRNA nucleotidyltransferase/poly(A) polymerase family. Archaeal CCA-adding enzyme subfamily. As to quaternary structure, homodimer. It depends on Mg(2+) as a cofactor.

It catalyses the reaction a tRNA precursor + 2 CTP + ATP = a tRNA with a 3' CCA end + 3 diphosphate. The enzyme catalyses a tRNA with a 3' CCA end + 2 CTP + ATP = a tRNA with a 3' CCACCA end + 3 diphosphate. In terms of biological role, catalyzes the addition and repair of the essential 3'-terminal CCA sequence in tRNAs without using a nucleic acid template. Adds these three nucleotides in the order of C, C, and A to the tRNA nucleotide-73, using CTP and ATP as substrates and producing inorganic pyrophosphate. tRNA 3'-terminal CCA addition is required both for tRNA processing and repair. Also involved in tRNA surveillance by mediating tandem CCA addition to generate a CCACCA at the 3' terminus of unstable tRNAs. While stable tRNAs receive only 3'-terminal CCA, unstable tRNAs are marked with CCACCA and rapidly degraded. In Methanoregula boonei (strain DSM 21154 / JCM 14090 / 6A8), this protein is CCA-adding enzyme.